A 635-amino-acid polypeptide reads, in one-letter code: Threonine--tRNA ligase (635 aa).

Positions Met-1 to Arg-144 are editing domain. The segment at Pro-215–Pro-514 is catalytic. Residues Cys-307, His-359, and His-483 each contribute to the Zn(2+) site.

This sequence belongs to the class-II aminoacyl-tRNA synthetase family. Homodimer. Zn(2+) serves as cofactor.

The protein localises to the cytoplasm. It carries out the reaction tRNA(Thr) + L-threonine + ATP = L-threonyl-tRNA(Thr) + AMP + diphosphate + H(+). Its function is as follows. Catalyzes the attachment of threonine to tRNA(Thr) in a two-step reaction: L-threonine is first activated by ATP to form Thr-AMP and then transferred to the acceptor end of tRNA(Thr). Also edits incorrectly charged L-seryl-tRNA(Thr). The chain is Threonine--tRNA ligase from Methanosarcina barkeri (strain Fusaro / DSM 804).